The chain runs to 290 residues: Pantothenate synthetase (290 aa).

ATP is bound at residue 30 to 37 (MGALHEGH). The active-site Proton donor is His-37. Residue Gln-61 participates in (R)-pantoate binding. Gln-61 is a binding site for beta-alanine. Residue 147-150 (GEKD) participates in ATP binding. Gln-153 serves as a coordination point for (R)-pantoate. ATP is bound by residues Val-176 and 184-187 (KSSR).

The protein belongs to the pantothenate synthetase family. As to quaternary structure, homodimer.

Its subcellular location is the cytoplasm. It carries out the reaction (R)-pantoate + beta-alanine + ATP = (R)-pantothenate + AMP + diphosphate + H(+). The protein operates within cofactor biosynthesis; (R)-pantothenate biosynthesis; (R)-pantothenate from (R)-pantoate and beta-alanine: step 1/1. Catalyzes the condensation of pantoate with beta-alanine in an ATP-dependent reaction via a pantoyl-adenylate intermediate. The polypeptide is Pantothenate synthetase (Chlorobium chlorochromatii (strain CaD3)).